We begin with the raw amino-acid sequence, 137 residues long: Phospholipase A2 group V (137 aa).

A signal peptide spans 1–20 (MKRLLTLAWFLACSVPAVPG). Disulfide bonds link Cys-46/Cys-137, Cys-48/Cys-64, Cys-63/Cys-117, Cys-70/Cys-110, Cys-79/Cys-103, and Cys-97/Cys-108. Ca(2+) contacts are provided by Tyr-47, Gly-49, and Gly-51. Residue His-67 is part of the active site. Ca(2+) is bound at residue Asp-68. The active site involves Asp-111.

It belongs to the phospholipase A2 family. Requires Ca(2+) as cofactor. This enzyme lacks one of the seven disulfide bonds found in similar PA2 proteins.

It localises to the secreted. It is found in the cell membrane. The protein resides in the cytoplasmic vesicle. Its subcellular location is the phagosome. The protein localises to the recycling endosome. It localises to the golgi apparatus. It is found in the cis-Golgi network. The protein resides in the trans-Golgi network. It carries out the reaction a 1,2-diacyl-sn-glycero-3-phosphocholine + H2O = a 1-acyl-sn-glycero-3-phosphocholine + a fatty acid + H(+). It catalyses the reaction 1-hexadecanoyl-2-(9Z-octadecenoyl)-sn-glycero-3-phosphocholine + H2O = 1-hexadecanoyl-sn-glycero-3-phosphocholine + (9Z)-octadecenoate + H(+). The enzyme catalyses 1-hexadecanoyl-2-(5Z,8Z,11Z,14Z-eicosatetraenoyl)-sn-glycero-3-phosphocholine + H2O = 1-hexadecanoyl-sn-glycero-3-phosphocholine + (5Z,8Z,11Z,14Z)-eicosatetraenoate + H(+). The catalysed reaction is 1-hexadecanoyl-2-(9Z,12Z-octadecadienoyl)-sn-glycero-3-phosphoethanolamine + H2O = 1-hexadecanoyl-sn-glycero-3-phosphoethanolamine + (9Z,12Z)-octadecadienoate + H(+). It carries out the reaction 1-hexadecanoyl-2-(5Z,8Z,11Z,14Z-eicosatetraenoyl)-sn-glycero-3-phosphoethanolamine + H2O = 1-hexadecanoyl-sn-glycero-3-phosphoethanolamine + (5Z,8Z,11Z,14Z)-eicosatetraenoate + H(+). It catalyses the reaction 1-octadecanoyl-2-(5Z,8Z,11Z,14Z-eicosatetraenoyl)-sn-glycero-3-phospho-(1D-myo-inositol) + H2O = 1-octadecanoyl-sn-glycero-3-phospho-(1D-myo-inositol) + (5Z,8Z,11Z,14Z)-eicosatetraenoate + H(+). The enzyme catalyses 1-hexadecanoyl-2-(9Z-octadecenoyl)-sn-glycero-3-phosphoglycerol + H2O = 1-hexadecanoyl-sn-glycero-3-phosphoglycerol + (9Z)-octadecenoate + H(+). The catalysed reaction is N-hexadecanoyl-1,2-di-(9Z-octadecenoyl)-sn-glycero-3-phosphoethanolamine + H2O = N-hexadecanoyl-1-(9Z-octadecenoyl)-sn-glycero-3-phosphoethanolamine + (9Z)-octadecenoate + H(+). It carries out the reaction 1'-[1,2-di-(9Z-octadecenoyl)-sn-glycero-3-phospho]-3'-[1-(9Z-octadecenoyl)-sn-glycero-3-phospho]-glycerol + H2O = 1',3'-bis-[1-(9Z-octadecenoyl)-sn-glycero-3-phospho]-glycerol + (9Z)-octadecenoate + H(+). It catalyses the reaction 1',3'-bis[1,2-di-(9Z-octadecenoyl)-sn-glycero-3-phospho]-glycerol + H2O = 1'-[1,2-di-(9Z-octadecenoyl)-sn-glycero-3-phospho]-3'-[1-(9Z-octadecenoyl)-sn-glycero-3-phospho]-glycerol + (9Z)-octadecenoate + H(+). It functions in the pathway lipid metabolism; phospholipid metabolism. Its pathway is lipid metabolism; leukotriene B4 biosynthesis. It participates in lipid metabolism; leukotriene C4 biosynthesis. In terms of biological role, secretory calcium-dependent phospholipase A2 that primarily targets extracellular phospholipids. Hydrolyzes the ester bond of the fatty acyl group attached at sn-2 position of phospholipids (phospholipase A2 activity), preferentially releasing fatty acyl groups with a low degree of unsaturation such as oleoyl (C18:1) and linoleoyl (C18:2) groups. Hydrolyzes low-density lipoprotein (LDL) phospholipids releasing unsaturated fatty acids that drive macrophage polarization toward an M2 phenotype. May act in an autocrine and paracrine manner. Contributes to lipid remodeling of cellular membranes at different subcellular locations and generation of lipid mediators involved in pathogen clearance. Cleaves sn-2 fatty acyl chains of cardiolipin, a major component of the inner membrane of mitochondria and bacterial membranes. Promotes phagocytosis of bacteria in macrophages through production of lysophosphatidylethanolamines. Displays bactericidal activity against Gram-positive bacteria by directly hydrolyzing phospholipids of the bacterial membrane. Promotes phagocytosis and killing of ingested fungi likely through controlling phagosome-lysosome fusion and phagosome maturation. Plays a role in biosynthesis of cysteinyl leukotrienes (CysLTs) in myeloid cells. In eosinophils, triggers perinuclear arachidonate release and LTC4 synthesis in a PLA2G4A-independent way. In neutrophils, amplifies CysLTs biosynthesis initiated by PLA2G4A. Promotes immune complex clearance in macrophages via stimulating synthesis of CysLTs, which act through CYSLTR1 to trigger phagocytosis. May regulate antigen processing in antigen-presenting cells. In pulmonary macrophages regulates IL33 production required for activation of group 2 innate lymphoid cells. May play a role in the biosynthesis of N-acyl ethanolamines that regulate energy metabolism. Hydrolyzes N-acyl phosphatidylethanolamines to N-acyl lysophosphatidylethanolamines, which are further cleaved by a lysophospholipase D to release N-acyl ethanolamines. The polypeptide is Phospholipase A2 group V (Pla2g5) (Rattus norvegicus (Rat)).